Here is a 132-residue protein sequence, read N- to C-terminus: Small ribosomal subunit protein uS8 (132 aa).

This sequence belongs to the universal ribosomal protein uS8 family. Part of the 30S ribosomal subunit. Contacts proteins S5 and S12.

Functionally, one of the primary rRNA binding proteins, it binds directly to 16S rRNA central domain where it helps coordinate assembly of the platform of the 30S subunit. The sequence is that of Small ribosomal subunit protein uS8 from Rickettsia akari (strain Hartford).